A 427-amino-acid chain; its full sequence is POU domain protein CF1A (427 aa).

Disordered stretches follow at residues 39–77 (YMQH…GLGS), 196–217 (HHHM…TPTS), 288–309 (TTGS…KKRT), and 390–427 (HDMH…LAAH). Over residues 49 to 66 (AAAAAAHHQLPSSPSPNG) the composition is skewed to low complexity. Residues 67-77 (QGNGGGLGLGS) show a composition bias toward gly residues. The 75-residue stretch at 212 to 286 (EDTPTSDDLE…LLQKWLEEAD (75 aa)) folds into the POU-specific domain. Residues 304–363 (KRKKRTSIEVSVKGALEQHFHKQPKPSAQEITSLADSLQLEKEVVRVWFCNRRQKEKRMT) constitute a DNA-binding region (homeobox).

The protein belongs to the POU transcription factor family. Class-3 subfamily. In terms of tissue distribution, coexpressed with acj6 in overlapping subsets of neurons in the embryonic epidermis and central nervous system. First detected in the precursor of the tracheal pits and the stomodeal invagination and later in the peripheral nervous system.

Its subcellular location is the nucleus. Binds to a DNA sequence element required for the expression of the dopa decarboxylase gene (Ddc) in specific dopaminergic neurons. Could also play an early role in specific ectodermal cells, and a subsequent role in the embryonic nervous system. This Drosophila melanogaster (Fruit fly) protein is POU domain protein CF1A (vvl).